We begin with the raw amino-acid sequence, 179 residues long: MPMAKKLNISRINELKTNAYDNIESYDDPDTPKALEQFTSQIKKVLQADPKMLESVPEYLPVALYGRVKFPSDAKLKWAHWINTATQPDWDEFKVTIGFNNADLPLVLAVRAYSEDLLIESCAVLYLLENQGKATPAPKRSADDDFEDEDSDYADYSDDDDDEGEEEDGYYDHYDDEDR.

Residues 133–179 (KATPAPKRSADDDFEDEDSDYADYSDDDDDEGEEEDGYYDHYDDEDR) form a disordered region. Acidic residues predominate over residues 144–179 (DDFEDEDSDYADYSDDDDDEGEEEDGYYDHYDDEDR).

Its function is as follows. Part of an operon involved in cold adaptation. The sequence is that of Adaptation to cold protein A from Shewanella oneidensis (strain ATCC 700550 / JCM 31522 / CIP 106686 / LMG 19005 / NCIMB 14063 / MR-1).